Reading from the N-terminus, the 383-residue chain is Subtelomeric hrmA-associated cluster protein AFUB_078970 (383 aa).

Disordered regions lie at residues 118-145 (NPVS…KDDD) and 249-318 (QATQ…SARP). Low complexity predominate over residues 119-134 (PVSEVPESPPSTVKSS). One can recognise a Myb-like domain in the interval 318–364 (PYSAAEDDILQTLVARGLAWEEIEKEFGLRFAKRTMRSLQMRWSRKL).

Functionally, myb-like domain-containing protein; part of the subtelomeric hrmA-associated cluster (HAC) containing genes that alter the hyphal surface (such as reduced total chitin or increased beta-glucan exposure) and perturb inter-hyphal interactions within the developing biofilms, resulting in a loss of vertically aligned polarized growing filaments. Consequently, this hypoxia-typic morphotype (called H-MORPH) with altered biofilm architecture leads to increased hypoxia fitness, increased host inflammation, rapid disease progression, and mortality in a murine model of invasive aspergillosis. The chain is Subtelomeric hrmA-associated cluster protein AFUB_078970 from Aspergillus fumigatus (strain CBS 144.89 / FGSC A1163 / CEA10) (Neosartorya fumigata).